The following is a 265-amino-acid chain: Oxidoreductase nsrR (265 aa).

This sequence belongs to the avfA family.

The protein operates within secondary metabolite biosynthesis. Functionally, oxidoreductase; part of the gene cluster that mediates the biosynthesis of the tetrahydroxanthone dimer neosartorin, which exhibits antibacterial activity. The two different monomeric units appear to be synthesized by the same set of enzymes, among which the Baeyer-Villiger monooxygenase nsrF is the key enzyme for the divergence of the biosynthetic routes. The pathway begins with the synthesis of atrochrysone thioester by the polyketide synthase nsrB. The atrochrysone carboxyl ACP thioesterase nsrC then breaks the thioester bond and releases the atrochrysone carboxylic acid from AacuL. Atrochrysone carboxylic acid is decarboxylated by the decarboxylase nsrE, and oxidized by the anthrone oxygenase nsrD to yield emodin. Emodin is then reduced to emodin hydroquinone by the oxidoreductase nsrR. A-ring reduction by the short chain dehydrogenase nsrJ, dehydration by the scytalone dehydratase-like protein nsrI and probable spontaneous re-oxidation, results in overall deoxygenation to chrysophanol. The Baeyer-Villiger monooxygenase nsrF accepts chrysophanol as a substrate to insert one oxygen atom at two different positions to yield the precursors of both monomric units. NsrF is promiscuous/flexible in interacting with the 2 (non methylated and methylated) aromatic rings of chrysophanol, thus diverging the biosynthetic pathway at this point. After the hydrolysis of the lactones, methylesterification by the methyltransferase nsrG yields respectively moniliphenone and 2,2',6'-trihydroxy-4-methyl-6-methoxya-cyldiphenylmethanone. The next steps are the hydroxylation by the FAD-dependent monooxygenase nsrK, followed by isomerization by the monooxygenase nsrQ. The short chain dehydrogenase/reductase nsrO then catalyzes the C-5 ketoreduction to give the xanthone skeleton of blennolide C and 5-acetylblennolide A. The acetyltransferase nsrL has a strict substrate specificity and uses only blennolide A but not blennolide C to yield 5-acetylblennolide A as the single-acetylated product. In the final step of the biosynthesis, the heterodimerization of the 2 xanthones, blennolide C and 5-acetylblennolide A, is catalyzed by the cytochrome P450 monooxygenase nsrP. NsrP can utilize at least three different xanthones as its substrates to perform the dimerization reaction. The protein is Oxidoreductase nsrR of Aspergillus novofumigatus (strain IBT 16806).